We begin with the raw amino-acid sequence, 281 residues long: Leukocyte antigen CD37 (281 aa).

At 1 to 17 (MSAQESCLSLIKYFLFV) the chain is on the cytoplasmic side. A helical transmembrane segment spans residues 18-38 (FNLFFFVLGGLIFCFGTWILI). The Extracellular segment spans residues 39-59 (DKTSFVSFVGLSFVPLQTWSK). The chain crosses the membrane as a helical span at residues 60–74 (VLSVSGVLTMALALL). Residues 75-85 (GCVGALKELRC) are Cytoplasmic-facing. The chain crosses the membrane as a helical span at residues 86–111 (LLGLYFGMLLLLFATQITLGILISTQ). Topologically, residues 112–241 (RVRLERRVQE…RSLQKWLHNN (130 aa)) are extracellular. N170, N183, and N188 each carry an N-linked (GlcNAc...) asparagine glycan. A helical membrane pass occupies residues 242 to 266 (IISIVGICLGVGLLELGFMTLSIFL). The Cytoplasmic portion of the chain corresponds to 267 to 281 (CRNLDHVYDRLARYR).

It belongs to the tetraspanin (TM4SF) family. As to quaternary structure, interacts with SCIMP. Interacts with SOCS3. Interacts with DECTIN1/CLEC7A. Post-translationally, tyrosine phosphorylated; leading to activation of downstream signaling pathways. As to expression, B-lymphocytes.

The protein resides in the cell membrane. In terms of biological role, structural component of specialized membrane microdomains known as tetraspanin-enriched microdomains (TERMs), which act as platforms for receptor clustering and signaling. Participates thereby in diverse biological functions such as cell signal transduction, adhesion, migration and protein trafficking. Upon ligand binding, two signaling pathways are activated, one acting through phosphorylation by LYN leading to cell death or a survival pathway with activation of GSK3B. Plays an essential role essential for clustering of integrin ITGA4/ITGB1 and promotes its mobility in the plasma membrane of B-cells. In turn, participates in ITGA4/ITGB1 integrin-mediated antiapoptotic signaling through AKT. Plays also a role in the migration of dendritic cells and neutrophils to draining lymph nodes, as well as in their integrin-mediated adhesion. Negatively regulates IL-6 responses through direct interaction with SOCS3 thereby preventing constitutive IL-6 signaling. Alternatively, inhibition of IL-6 signaling can also occur via interaction and stabilization of DECTIN1/CLEC7A at the cell membrane to inhibit its ability to promote the production of IL-6. The protein is Leukocyte antigen CD37 (Cd37) of Rattus norvegicus (Rat).